We begin with the raw amino-acid sequence, 473 residues long: Inactive levansucrase (473 aa).

The first 29 residues, 1–29 (MNIKKFAKQATVLTFTTALLAGGATQAFA), serve as a signal peptide directing secretion.

Belongs to the glycosyl hydrolase 68 family.

It is found in the secreted. The protein is Inactive levansucrase (sacB) of Geobacillus stearothermophilus (Bacillus stearothermophilus).